We begin with the raw amino-acid sequence, 310 residues long: UPF0324 membrane protein GSU2818 (310 aa).

The next 9 membrane-spanning stretches (helical) occupy residues 11-33 (FTIL…VMGI), 53-72 (MLLQ…GEVI), 79-97 (IWYS…YGLG), 107-129 (SALI…APVL), 136-158 (TAVA…PLVG), 193-215 (ALAI…VMAA), 227-244 (IPLF…RTLL), 254-273 (LAGV…GAGL), and 286-308 (LVQA…KLPW).

This sequence belongs to the UPF0324 family.

It is found in the cell membrane. This chain is UPF0324 membrane protein GSU2818, found in Geobacter sulfurreducens (strain ATCC 51573 / DSM 12127 / PCA).